A 192-amino-acid polypeptide reads, in one-letter code: Intraflagellar transport protein 22 (192 aa).

GTP is bound by residues 12–19 (GPQRTGKT) and 62–69 (WDVSGSVQ).

This sequence belongs to the small GTPase superfamily. Rab family. As to quaternary structure, component of the IFT complex B, composed of IFT88, IFT70, IFT52, IFT46, IFT27, IFT25 and IFT22.

Its subcellular location is the cell projection. It is found in the cilium. It localises to the flagellum. Component of the intraflagellar transport (IFT) complex B. Functions in regulating the cellular pool size of both complex A and complex B and thus plays a critical role in determining the cellular availability of IFT particles. The sequence is that of Intraflagellar transport protein 22 (FAP9) from Chlamydomonas reinhardtii (Chlamydomonas smithii).